The sequence spans 698 residues: Gametogenetin-binding protein 2 (698 aa).

The disordered stretch occupies residues 555–575; it reads CMADPGNRETSGNTTHTEFHR.

The protein resides in the cytoplasm. Its function is as follows. May be involved in spermatogenesis. This is Gametogenetin-binding protein 2 (GGNBP2) from Gallus gallus (Chicken).